Here is a 255-residue protein sequence, read N- to C-terminus: Accessory gland-specific peptide 26Aa (255 aa).

Positions 1–18 (MNLILLCSQILLLLFTVA) are cleaved as a signal peptide. The interval 86 to 110 (PINNSKSRKNSSTLPSQILTDKPNQ) is disordered. Residues 87 to 110 (INNSKSRKNSSTLPSQILTDKPNQ) show a composition bias toward polar residues. Residues Asn-88, Asn-95, and Asn-136 are each glycosylated (N-linked (GlcNAc...) asparagine). 2 disordered regions span residues 177–196 (NAQN…SKDI) and 235–255 (NNPA…PSTT). A compositionally biased stretch (basic residues) spans 183–192 (KSTKSCKKRP). Residues 245-255 (KSPSEGNPSTT) are compositionally biased toward polar residues.

Post-translationally, it undergoes several cleavages as it is secreted and it is further processed in the recipient female. Main cells of the accessory glands of males.

It is found in the secreted. Its subcellular location is the extracellular space. Its function is as follows. This protein is transferred from male to female's hemolymph during mating, affecting egglaying and behavior after mating. The protein is Accessory gland-specific peptide 26Aa (Acp26Aa) of Drosophila sechellia (Fruit fly).